A 189-amino-acid polypeptide reads, in one-letter code: dCTP deaminase (189 aa).

Residues 112-117 (KSTYAR), 136-138 (TLE), Q157, Y171, and Q181 each bind dCTP. The active-site Proton donor/acceptor is E138.

It belongs to the dCTP deaminase family. As to quaternary structure, homotrimer.

The enzyme catalyses dCTP + H2O + H(+) = dUTP + NH4(+). It functions in the pathway pyrimidine metabolism; dUMP biosynthesis; dUMP from dCTP (dUTP route): step 1/2. In terms of biological role, catalyzes the deamination of dCTP to dUTP. The polypeptide is dCTP deaminase (Xanthomonas axonopodis pv. citri (strain 306)).